A 157-amino-acid polypeptide reads, in one-letter code: UPF0251 protein CLM_1546 (157 aa).

This sequence belongs to the UPF0251 family.

The protein is UPF0251 protein CLM_1546 of Clostridium botulinum (strain Kyoto / Type A2).